We begin with the raw amino-acid sequence, 406 residues long: Prenyltransferase phqJ (406 aa).

The span at 1–19 (MTVSTESNFPHGASTQKPQ) shows a compositional bias: polar residues. Residues 1-23 (MTVSTESNFPHGASTQKPQSAEP) are disordered. Brevianamide F is bound at residue E99. Dimethylallyl diphosphate-binding residues include R113, K200, and Y202. Y204 provides a ligand contact to brevianamide F. Residues K269, Y271, and Y340 each coordinate dimethylallyl diphosphate.

Belongs to the tryptophan dimethylallyltransferase family.

Its pathway is alkaloid biosynthesis. In terms of biological role, prenyltransferase; part of the gene cluster that mediates the biosynthesis of paraherquamide, a fungal indole alkaloid that belongs to a family of natural products containing a characteristic bicyclo[2.2.2]diazaoctane core. The first steps in the biosynthesis of paraherquamide is the production of the beta-methyl-proline precursor from L-isoleucine. They require oxidation of a terminally hydroxylated L-isoleucine to the corresponding aldehyde by enzymes which have still to be identified. Spontaneous cyclization and dehydration would yield the 4-methyl pyrolline-5-carboxylic acid, which is then reduced by the pyrroline-5-carboxylate reductase phqD leading to the beta-methyl-proline precursor. The next step of paraherquamide biosynthesis involves coupling of beta-methyl-proline and L-tryptophan by the bimodular NRPS phqB, to produce a monooxopiperazine intermediate. The reductase (R) domain of phqB utilizes NADPH for hydride transfer to reduce the thioester bond of the T domain-tethered linear dipeptide to a hemithioaminal intermediate, which spontaneously cleaves the C-S bond to release the aldehyde product. This compound undergoes spontaneous cyclization and dehydration to give a dienamine which is reverse prenylated at C-2 by the reverse prenyltransferase phqJ. The other prenyltransferase present in the cluster, phqI may be a redundant gene in the pathway. During biosynthetic assembly, the key step to produce the polycyclic core is catalyzed by the bifunctional reductase and intramolecular [4+2] Diels-Alderase, phqE, resulting in formation of the [2.2.2] diazaoctane intermediate preparaherquamide. Following formation of preparaherquamide, an indole 2,3-epoxidation-initiated pinacol-like rearrangement is catalyzed by the phqK FAD-dependent monooxygenase. The prenyltransferase phqA, the cytochrome P450 monooxygenase phqL, and the FAD-linked oxidoreductase phqH (or the cytochrome P450 monooxygenase phqM), are proposed to be involved in the formation of the pyran ring. The FAD-dependent monooxygenase phqK is likely responsible for generation of the spiro-oxindole, and the N-methylation is likely mediated by the phqN methyltransferase leading to the isolable natural product paraherquamide F. However, the order of these biosynthetic steps has still to be determined. In late-stage paraherquamide biosynthesis, the third P450 monooxygenase, phqO, is probably responsible for the C-14 hydroxylation, transforming paraherquamide F to paraherquamide G, and paraherquamide E to the final product paraherquamide A. The expansion from the 6-membered ring pyran (in paraherquamides F and G) to the 7-membered dioxepin ring (in paraherquamides A and E) represents a poorly understood but intriguing process that probably involves the 2-oxoglutarate-dependent dioxygenase phqC. Finally, the remaining members of the paraherquamide cluster, including phqI as well as phqM (or phqH), do not have a clearly prescribed role and appear to be redundant. The sequence is that of Prenyltransferase phqJ from Penicillium fellutanum.